A 350-amino-acid polypeptide reads, in one-letter code: Sodium/calcium exchanger MaX1 (350 aa).

The next 10 helical transmembrane spans lie at 4-24 (VNFLILLLGLVFLVKGSDYFV), 39-59 (FVIGLTLVAIGTSIPELASSI), 69-89 (IVIGNVVGSNIANVGLIVGVA), 101-121 (MLKRDGYIMLFSAVLFFVFAF), 125-145 (LSMLEAGLFVLLYIAYVFFLF), 202-222 (GGFAKDIFTLVLSCAAIVIGA), 242-264 (VIGTTLVAVGTSLPELVVTVSAA), 276-296 (VIGSNITNIFLILGLSGLFYP), 302-322 (MSLFFTTPVMIAISLILLIFI), and 330-350 (RWEGVVLMMFYVAFLVVLFYI).

It belongs to the Ca(2+):cation antiporter (CaCA) (TC 2.A.19) family.

Its subcellular location is the cell membrane. Calcium transport is inhibited by Na(+), K(+), Li(+), Mg(2+) or Mn(2+). Functionally, catalyzes Na(+)/Ca(2+) exchange. The transport is electrogenic with a likely stoichiometry of 3 or more Na(+) for each Ca(2+). Is K(+)-independent. The chain is Sodium/calcium exchanger MaX1 (maX1) from Methanosarcina acetivorans (strain ATCC 35395 / DSM 2834 / JCM 12185 / C2A).